Consider the following 564-residue polypeptide: H/ACA ribonucleoprotein complex non-core subunit NAF1 (564 aa).

5 disordered regions span residues 1–29 (MESE…ELGK), 108–218 (LVVQ…DSEG), 238–264 (DEDD…KVRG), 387–489 (ASWE…HPSY), and 538–564 (PHMY…PPPS). Low complexity predominate over residues 146 to 157 (ASGLSLLAAYSS). A compositionally biased stretch (acidic residues) spans 238–249 (DEDDEDFDEDGA). Thr250 bears the Phosphothreonine mark. Ser254 bears the Phosphoserine mark. Over residues 388–402 (SWEHDVEPPARYVDH) the composition is skewed to basic and acidic residues. Ser403 carries the post-translational modification Phosphoserine. A compositionally biased stretch (low complexity) spans 426 to 446 (STDSVDTVTSVATTATKASSV). Thr427 is subject to Phosphothreonine. A Phosphoserine modification is found at Ser429. A Phosphothreonine modification is found at Thr432. Over residues 468 to 489 (PSINQHNQNQPQDEQYNFHPSY) the composition is skewed to polar residues. A compositionally biased stretch (pro residues) spans 538–553 (PHMYPPPPPFAPPPPN). Over residues 554–564 (NQSHQGQPPPS) the composition is skewed to polar residues.

This sequence belongs to the NAF1 family. As to quaternary structure, during assembly of the complex, component of the box H/ACA small nucleolar ribonucleoprotein (H/ACA snoRNP) complex.

It is found in the nucleus. In terms of biological role, RNA-binding protein required for the maturation of the box H/ACA small nucleolar ribonucleoprotein (H/ACA snoRNP) complex and ribosome biogenesis. During assembly of the H/ACA snoRNP complex it associates with the complex and dissociates during complex maturation, becoming replaced by Gar1 to yield mature H/ACA snoRNP complex. The protein is H/ACA ribonucleoprotein complex non-core subunit NAF1 of Drosophila melanogaster (Fruit fly).